We begin with the raw amino-acid sequence, 274 residues long: Syntaxin-12 (274 aa).

2 disordered regions span residues 1-20 and 128-147; these read MSYG…PQPR and EKES…EDRQ. Ser2 is subject to N-acetylserine. Residues 2–250 are Cytoplasmic-facing; sequence SYGPLDMYRN…AYYQKKSRKK (249 aa). A coiled-coil region spans residues 33 to 130; sequence IQRISQATAQ…QRKVSEKEKE (98 aa). Phosphoserine occurs at positions 139, 142, 218, and 225. The t-SNARE coiled-coil homology domain maps to 178–240; that stretch reads LELIKERETA…ERATDQLQRA (63 aa). The helical; Anchor for type IV membrane protein transmembrane segment at 251 to 271 threads the bilayer; that stretch reads MCILVLVLSVIVTVLVVVIWV. At 272–274 the chain is on the vesicular side; the sequence is ASK.

Belongs to the syntaxin family. Associates with the BLOC-1 complex. Interacts with BLOC1S6. Interacts with NAPA and SNAP23. Identified in a complex containing STX6, STX12, VAMP4 and VTI1A. Interacts with GRIPAP1. Forms a complex with GRIP1, GRIA2 and NSG1; controls the intracellular fate of AMPAR and the endosomal sorting of the GRIA2 subunit toward recycling and membrane targeting. Interacts with NSG1. Interacts with TPC1. Interacts (via N-terminus) with VPS13B.

The protein resides in the endosome membrane. It is found in the golgi apparatus membrane. It localises to the endomembrane system. Its subcellular location is the early endosome membrane. The protein localises to the recycling endosome membrane. SNARE promoting fusion of transport vesicles with target membranes. Together with SNARE STX6, promotes movement of vesicles from endosomes to the cell membrane, and may therefore function in the endocytic recycling pathway. Through complex formation with GRIP1, GRIA2 and NSG1 controls the intracellular fate of AMPAR and the endosomal sorting of the GRIA2 subunit toward recycling and membrane targeting. This Mus musculus (Mouse) protein is Syntaxin-12 (Stx12).